The sequence spans 339 residues: 3-isopropylmalate dehydrogenase (339 aa).

Substrate contacts are provided by arginine 88, arginine 98, arginine 122, and aspartate 212. Mg(2+)-binding residues include aspartate 212, aspartate 236, and aspartate 240. 272–284 (GSAPDIAGQGIAD) serves as a coordination point for NAD(+).

The protein belongs to the isocitrate and isopropylmalate dehydrogenases family. LeuB type 2 subfamily. In terms of assembly, homodimer. Mg(2+) is required as a cofactor. The cofactor is Mn(2+).

It is found in the cytoplasm. It carries out the reaction (2R,3S)-3-isopropylmalate + NAD(+) = 4-methyl-2-oxopentanoate + CO2 + NADH. It participates in amino-acid biosynthesis; L-leucine biosynthesis; L-leucine from 3-methyl-2-oxobutanoate: step 3/4. Catalyzes the oxidation of 3-carboxy-2-hydroxy-4-methylpentanoate (3-isopropylmalate) to 3-carboxy-4-methyl-2-oxopentanoate. The product decarboxylates to 4-methyl-2 oxopentanoate. The chain is 3-isopropylmalate dehydrogenase from Corynebacterium urealyticum (strain ATCC 43042 / DSM 7109).